A 216-amino-acid chain; its full sequence is UDP-N-acetylbacillosamine N-acetyltransferase (216 aa).

The Proton acceptor role is filled by His-137. His-146 is an acetyl-CoA binding site.

Belongs to the transferase hexapeptide repeat family. In terms of assembly, forms oligomers.

The enzyme catalyses UDP-N-acetylbacillosamine + acetyl-CoA = UDP-N,N'-diacetylbacillosamine + CoA + H(+). Catalyzes the conversion of UDP-2,4,6-trideoxy-2-acetamido-4-amino glucose to UDP-2,4,6-trideoxy-2,4-diacetamido glucose, commonly known as UDP-N,N'-diacetylbacillosamine (UDP-diNAcBac). The chain is UDP-N-acetylbacillosamine N-acetyltransferase from Bacillus subtilis (strain 168).